A 610-amino-acid polypeptide reads, in one-letter code: Dihydroxy-acid dehydratase (610 aa).

Position 81 (aspartate 81) interacts with Mg(2+). Position 122 (cysteine 122) interacts with [2Fe-2S] cluster. Residues aspartate 123 and lysine 124 each contribute to the Mg(2+) site. Position 124 is an N6-carboxylysine (lysine 124). Cysteine 193 contacts [2Fe-2S] cluster. Glutamate 489 contacts Mg(2+). Serine 515 (proton acceptor) is an active-site residue.

The protein belongs to the IlvD/Edd family. Homodimer. [2Fe-2S] cluster is required as a cofactor. Requires Mg(2+) as cofactor.

It carries out the reaction (2R)-2,3-dihydroxy-3-methylbutanoate = 3-methyl-2-oxobutanoate + H2O. The enzyme catalyses (2R,3R)-2,3-dihydroxy-3-methylpentanoate = (S)-3-methyl-2-oxopentanoate + H2O. It functions in the pathway amino-acid biosynthesis; L-isoleucine biosynthesis; L-isoleucine from 2-oxobutanoate: step 3/4. Its pathway is amino-acid biosynthesis; L-valine biosynthesis; L-valine from pyruvate: step 3/4. In terms of biological role, functions in the biosynthesis of branched-chain amino acids. Catalyzes the dehydration of (2R,3R)-2,3-dihydroxy-3-methylpentanoate (2,3-dihydroxy-3-methylvalerate) into 2-oxo-3-methylpentanoate (2-oxo-3-methylvalerate) and of (2R)-2,3-dihydroxy-3-methylbutanoate (2,3-dihydroxyisovalerate) into 2-oxo-3-methylbutanoate (2-oxoisovalerate), the penultimate precursor to L-isoleucine and L-valine, respectively. This is Dihydroxy-acid dehydratase from Xylella fastidiosa (strain 9a5c).